Consider the following 177-residue polypeptide: Large ribosomal subunit protein uL6 (177 aa).

This sequence belongs to the universal ribosomal protein uL6 family. As to quaternary structure, part of the 50S ribosomal subunit.

Its function is as follows. This protein binds to the 23S rRNA, and is important in its secondary structure. It is located near the subunit interface in the base of the L7/L12 stalk, and near the tRNA binding site of the peptidyltransferase center. This chain is Large ribosomal subunit protein uL6, found in Erwinia tasmaniensis (strain DSM 17950 / CFBP 7177 / CIP 109463 / NCPPB 4357 / Et1/99).